A 386-amino-acid polypeptide reads, in one-letter code: 26S proteasome non-ATPase regulatory subunit 13 homolog A (386 aa).

An N-acetylalanine modification is found at Ala-2. The PCI domain maps to 173–347; it reads EFSDFYKSAL…GTIYVSWAQP (175 aa).

It belongs to the proteasome subunit S11 family. As to quaternary structure, component of the 19S regulatory particle (RP/PA700) lid subcomplex of the 26S proteasome. The 26S proteasome is composed of a core protease (CP), known as the 20S proteasome, capped at one or both ends by the 19S regulatory particle (RP/PA700). The RP/PA700 complex is composed of at least 17 different subunits in two subcomplexes, the base and the lid, which form the portions proximal and distal to the 20S proteolytic core, respectively. In terms of tissue distribution, ubiquitous with highest expression in flowers.

Acts as a regulatory subunit of the 26S proteasome which is involved in the ATP-dependent degradation of ubiquitinated proteins. The polypeptide is 26S proteasome non-ATPase regulatory subunit 13 homolog A (RPN9A) (Arabidopsis thaliana (Mouse-ear cress)).